The chain runs to 371 residues: Putative transport protein YtvI (371 aa).

9 helical membrane-spanning segments follow: residues 6–26, 30–50, 65–85, 168–188, 225–245, 256–276, 283–303, 312–332, and 334–354; these read ITIF…IAAA, FPLT…HPVV, VLGV…ILVA, FFAL…ATFF, GFIK…FIGL, IAFL…SVFV, SITG…VVLI, ILSK…FAGF, and LFGF…QAFI.

The protein belongs to the autoinducer-2 exporter (AI-2E) (TC 2.A.86) family.

The protein resides in the cell membrane. The protein is Putative transport protein YtvI (ytvI) of Bacillus subtilis (strain 168).